Here is a 325-residue protein sequence, read N- to C-terminus: Probable tRNA pseudouridine synthase B (325 aa).

The Nucleophile role is filled by Asp71. Positions 238-313 (LPKIYVKDSA…VAASIERVIM (76 aa)) constitute a PUA domain.

The protein belongs to the pseudouridine synthase TruB family. Type 2 subfamily.

The enzyme catalyses uridine(55) in tRNA = pseudouridine(55) in tRNA. Functionally, could be responsible for synthesis of pseudouridine from uracil-55 in the psi GC loop of transfer RNAs. The polypeptide is Probable tRNA pseudouridine synthase B (Korarchaeum cryptofilum (strain OPF8)).